We begin with the raw amino-acid sequence, 284 residues long: Pantothenate synthetase (284 aa).

32-39 (MGALHEGH) is an ATP binding site. Residue H39 is the Proton donor of the active site. Q63 contributes to the (R)-pantoate binding site. Q63 serves as a coordination point for beta-alanine. 149–152 (GEKD) is a binding site for ATP. Q155 contributes to the (R)-pantoate binding site. Residues V178 and 186 to 189 (LSSR) contribute to the ATP site.

The protein belongs to the pantothenate synthetase family. Homodimer.

It localises to the cytoplasm. The enzyme catalyses (R)-pantoate + beta-alanine + ATP = (R)-pantothenate + AMP + diphosphate + H(+). It participates in cofactor biosynthesis; (R)-pantothenate biosynthesis; (R)-pantothenate from (R)-pantoate and beta-alanine: step 1/1. Catalyzes the condensation of pantoate with beta-alanine in an ATP-dependent reaction via a pantoyl-adenylate intermediate. This is Pantothenate synthetase from Chelativorans sp. (strain BNC1).